A 109-amino-acid chain; its full sequence is ATP-dependent Clp protease adapter protein ClpS (109 aa).

Residues 1 to 23 (MTERKHDDTGVEEGTGLATKTRP) form a disordered region.

This sequence belongs to the ClpS family. Binds to the N-terminal domain of the chaperone ClpA.

Involved in the modulation of the specificity of the ClpAP-mediated ATP-dependent protein degradation. The protein is ATP-dependent Clp protease adapter protein ClpS of Maricaulis maris (strain MCS10) (Caulobacter maris).